Reading from the N-terminus, the 224-residue chain is Large ribosomal subunit protein bL25 (224 aa).

Positions Val196 to Glu224 are disordered. The span at Glu197 to Ala208 shows a compositional bias: acidic residues.

It belongs to the bacterial ribosomal protein bL25 family. CTC subfamily. Part of the 50S ribosomal subunit; part of the 5S rRNA/L5/L18/L25 subcomplex. Contacts the 5S rRNA. Binds to the 5S rRNA independently of L5 and L18.

This is one of the proteins that binds to the 5S RNA in the ribosome where it forms part of the central protuberance. The protein is Large ribosomal subunit protein bL25 of Psychrobacter sp. (strain PRwf-1).